We begin with the raw amino-acid sequence, 466 residues long: Cysteine--tRNA ligase (466 aa).

Cysteine 28 is a Zn(2+) binding site. A 'HIGH' region motif is present at residues 30-40; sequence PTVYNYIHIGN. Zn(2+)-binding residues include cysteine 208, histidine 233, and glutamate 237. Residues 265 to 269 carry the 'KMSKS' region motif; sequence KMSKS. Lysine 268 contacts ATP.

Belongs to the class-I aminoacyl-tRNA synthetase family. As to quaternary structure, monomer. Zn(2+) is required as a cofactor.

It is found in the cytoplasm. The catalysed reaction is tRNA(Cys) + L-cysteine + ATP = L-cysteinyl-tRNA(Cys) + AMP + diphosphate. The protein is Cysteine--tRNA ligase of Staphylococcus aureus (strain bovine RF122 / ET3-1).